Consider the following 443-residue polypeptide: Chromosomal replication initiator protein DnaA (443 aa).

Residues 1–75 (MNTQLNEIWQ…AIKQVTFKEY (75 aa)) form a domain I, interacts with DnaA modulators region. Positions 75–105 (YEIAFIVPSQENLNKLTKQTESAGNEDSPLS) are domain II. Positions 106–321 (VLNPKYTFDT…GALNRVIAYS (216 aa)) are domain III, AAA+ region. ATP is bound by residues G150, G152, K153, and T154. The interval 322–443 (SLTENEITVE…SEIKRNLLGK (122 aa)) is domain IV, binds dsDNA.

This sequence belongs to the DnaA family. In terms of assembly, oligomerizes as a right-handed, spiral filament on DNA at oriC.

It localises to the cytoplasm. Its function is as follows. Plays an essential role in the initiation and regulation of chromosomal replication. ATP-DnaA binds to the origin of replication (oriC) to initiate formation of the DNA replication initiation complex once per cell cycle. Binds the DnaA box (a 9 base pair repeat at the origin) and separates the double-stranded (ds)DNA. Forms a right-handed helical filament on oriC DNA; dsDNA binds to the exterior of the filament while single-stranded (ss)DNA is stabiized in the filament's interior. The ATP-DnaA-oriC complex binds and stabilizes one strand of the AT-rich DNA unwinding element (DUE), permitting loading of DNA polymerase. After initiation quickly degrades to an ADP-DnaA complex that is not apt for DNA replication. Binds acidic phospholipids. This is Chromosomal replication initiator protein DnaA from Acetivibrio thermocellus (strain ATCC 27405 / DSM 1237 / JCM 9322 / NBRC 103400 / NCIMB 10682 / NRRL B-4536 / VPI 7372) (Clostridium thermocellum).